Reading from the N-terminus, the 111-residue chain is Entry-fusion complex protein OPG086 (111 aa).

Residues 1–21 form a helical; Signal-anchor membrane-spanning segment; that stretch reads MASLLYFILFLLFVCISYYFT. Over 22 to 111 the chain is Virion surface; sequence YYPTNKLQAA…TLLPILLLSK (90 aa).

The protein belongs to the orthopoxvirus OPG086 family. In terms of assembly, interacts with OPG099/L5. Component of the entry fusion complex (EFC) composed of OPG053, OPG076, OPG086, OPG094, OPG095, OPG099, OPG107, OPG143, OPG104, OPG147 and OPG155. Except for OPG095 and OPG053, each of the EFC proteins is required for assembly or stability of the complex. Post-translationally, unglycosylated because produced in viral factories instead of the classic ER -Golgi route.

Its subcellular location is the virion membrane. Its function is as follows. Component of the entry fusion complex (EFC), which consists of 11 proteins. During cell infection, this complex mediates entry of the virion core into the host cytoplasm by a two-step mechanism consisting of lipid mixing of the viral and cellular membranes and subsequent pore formation. The polypeptide is Entry-fusion complex protein OPG086 (OPG086) (Variola virus (isolate Human/India/Ind3/1967) (VARV)).